Here is a 231-residue protein sequence, read N- to C-terminus: NADH-ubiquinone oxidoreductase chain 4 (231 aa).

6 helical membrane passes run 1 to 21 (PIAGSMVLAAILLKLGGYGII), 34 to 54 (MFLPLVVLALWGAVLANLTCL), 63 to 85 (IAYSSISHMGLVAAAIIIQTPWG), 89 to 111 (GMTLMIAHGFTSSALFCLANTTY), 118 to 138 (ILILTRGFHNILPMATTWWLL), and 156 to 176 (LLIMSALFNWCPTTIIMLGLS).

It belongs to the complex I subunit 4 family.

The protein resides in the mitochondrion membrane. It carries out the reaction a ubiquinone + NADH + 5 H(+)(in) = a ubiquinol + NAD(+) + 4 H(+)(out). Functionally, core subunit of the mitochondrial membrane respiratory chain NADH dehydrogenase (Complex I) that is believed to belong to the minimal assembly required for catalysis. Complex I functions in the transfer of electrons from NADH to the respiratory chain. The immediate electron acceptor for the enzyme is believed to be ubiquinone. In Calloselasma rhodostoma (Malayan pit viper), this protein is NADH-ubiquinone oxidoreductase chain 4 (MT-ND4).